The following is a 200-amino-acid chain: 3-isopropylmalate dehydratase small subunit (200 aa).

This sequence belongs to the LeuD family. LeuD type 1 subfamily. Heterodimer of LeuC and LeuD.

It carries out the reaction (2R,3S)-3-isopropylmalate = (2S)-2-isopropylmalate. Its pathway is amino-acid biosynthesis; L-leucine biosynthesis; L-leucine from 3-methyl-2-oxobutanoate: step 2/4. Its function is as follows. Catalyzes the isomerization between 2-isopropylmalate and 3-isopropylmalate, via the formation of 2-isopropylmaleate. The protein is 3-isopropylmalate dehydratase small subunit of Pseudarthrobacter chlorophenolicus (strain ATCC 700700 / DSM 12829 / CIP 107037 / JCM 12360 / KCTC 9906 / NCIMB 13794 / A6) (Arthrobacter chlorophenolicus).